A 179-amino-acid chain; its full sequence is tRNA (cytidine(56)-2'-O)-methyltransferase (179 aa).

S-adenosyl-L-methionine contacts are provided by residues Leu82, 112–116, and 130–137; these read GAEKV and VGNQPHSE.

Belongs to the aTrm56 family. In terms of assembly, homodimer.

It localises to the cytoplasm. The catalysed reaction is cytidine(56) in tRNA + S-adenosyl-L-methionine = 2'-O-methylcytidine(56) in tRNA + S-adenosyl-L-homocysteine + H(+). In terms of biological role, specifically catalyzes the AdoMet-dependent 2'-O-ribose methylation of cytidine at position 56 in tRNAs. The protein is tRNA (cytidine(56)-2'-O)-methyltransferase of Methanococcus maripaludis (strain C7 / ATCC BAA-1331).